The chain runs to 260 residues: Protein SVS1 (260 aa).

A signal peptide spans 1-19; that stretch reads MIFKILCSLLLVTSNFASA. N-linked (GlcNAc...) asparagine glycosylation is found at asparagine 23, asparagine 249, and asparagine 256.

Required for vanadate resistance. The protein is Protein SVS1 (SVS1) of Saccharomyces cerevisiae (strain ATCC 204508 / S288c) (Baker's yeast).